Reading from the N-terminus, the 390-residue chain is Nucleotide-sugar uncharacterized transporter 1 (390 aa).

10 helical membrane passes run 61–81 (ICGP…IIFM), 89–109 (IGFE…YLLM), 128–148 (SLLP…LANV), 155–175 (VGFY…AEFL), 182–201 (SFMK…VATV), 206–228 (FSLF…KILW), 249–269 (ITLL…ALSF), 278–298 (AILV…LALG), 306–326 (VVLG…IFGS), and 329–349 (GFIS…YTYL). The span at 356 to 365 (LKTSSSSSAL) shows a compositional bias: low complexity. Positions 356 to 390 (LKTSSSSSALSEKKSRFSDLKDDDKNLEPYGSEAV) are disordered. The span at 366-382 (SEKKSRFSDLKDDDKNL) shows a compositional bias: basic and acidic residues.

It belongs to the TPT transporter family. TPT (TC 2.A.7.9) subfamily.

Its subcellular location is the membrane. In Arabidopsis thaliana (Mouse-ear cress), this protein is Nucleotide-sugar uncharacterized transporter 1.